Reading from the N-terminus, the 706-residue chain is MEMFTFLLTCIFLPLLRGHSLFTCEPITVPRCMKMAYNMTFFPNLMGHYDQSIAAVEMEHFLPLANLECSPNIETFLCKAFVPTCIEQIHVVPPCRKLCEKVYSDCKKLIDTFGIRWPEELECDRLQYCDETVPVTFDPHTEFLGPQKKTEQVQRDIGFWCPRHLKTSGGQGYKFLGIDQCAPPCPNMYFKSDELEFAKSFIGTVSIFCLCATLFTFLTFLIDVRRFRYPERPIIYYSVCYSIVSLMYFIGFLLGDSTACNKADEKLELGDTVVLGSQNKACTVLFMLLYFFTMAGTVWWVILTITWFLAAGRKWSCEAIEQKAVWFHAVAWGTPGFLTVMLLAMNKVEGDNISGVCFVGLYDLDASRYFVLLPLCLCVFVGLSLLLAGIISLNHVRQVIQHDGRNQEKLKKFMIRIGVFSGLYLVPLVTLLGCYVYEQVNRITWEITWVSDHCRQYHIPCPYQAKAKARPELALFMIKYLMTLIVGISAVFWVGSKKTCTEWAGFFKRNRKRDPISESRRVLQESCEFFLKHNSKVKHKKKHYKPSSHKLKVISKSMGTSTGATANHGTSAVAITSHDYLGQETLTEIQTSPETSMREVKADGASTPRLREQDCGEPASPAASISRLSGEQVDGKGQAGSVSESARSEGRISPKSDITDTGLAQSNNLQVPSSSEPSSLKGSTSLLVHPVSGVRKEQGGGCHSDT.

Residues 1-18 (MEMFTFLLTCIFLPLLRG) form the signal peptide. The region spanning 19–132 (HSLFTCEPIT…CDRLQYCDET (114 aa)) is the FZ domain. The Extracellular portion of the chain corresponds to 19–201 (HSLFTCEPIT…SDELEFAKSF (183 aa)). Cystine bridges form between cysteine 24–cysteine 85, cysteine 32–cysteine 78, cysteine 69–cysteine 106, cysteine 95–cysteine 129, and cysteine 99–cysteine 123. Asparagine 38 carries an N-linked (GlcNAc...) asparagine glycan. A helical membrane pass occupies residues 202-222 (IGTVSIFCLCATLFTFLTFLI). Residues 223 to 233 (DVRRFRYPERP) lie on the Cytoplasmic side of the membrane. A helical transmembrane segment spans residues 234 to 254 (IIYYSVCYSIVSLMYFIGFLL). The Extracellular portion of the chain corresponds to 255 to 284 (GDSTACNKADEKLELGDTVVLGSQNKACTV). The helical transmembrane segment at 285–305 (LFMLLYFFTMAGTVWWVILTI) threads the bilayer. Residues 306–324 (TWFLAAGRKWSCEAIEQKA) lie on the Cytoplasmic side of the membrane. The helical transmembrane segment at 325 to 345 (VWFHAVAWGTPGFLTVMLLAM) threads the bilayer. The Extracellular segment spans residues 346-370 (NKVEGDNISGVCFVGLYDLDASRYF). An N-linked (GlcNAc...) asparagine glycan is attached at asparagine 352. Residues 371 to 391 (VLLPLCLCVFVGLSLLLAGII) traverse the membrane as a helical segment. At 392–416 (SLNHVRQVIQHDGRNQEKLKKFMIR) the chain is on the cytoplasmic side. The helical transmembrane segment at 417 to 437 (IGVFSGLYLVPLVTLLGCYVY) threads the bilayer. Topologically, residues 438 to 473 (EQVNRITWEITWVSDHCRQYHIPCPYQAKAKARPEL) are extracellular. A helical transmembrane segment spans residues 474-494 (ALFMIKYLMTLIVGISAVFWV). The Cytoplasmic segment spans residues 495 to 706 (GSKKTCTEWA…EQGGGCHSDT (212 aa)). A Lys-Thr-X-X-X-Trp motif, mediates interaction with the PDZ domain of Dvl family members motif is present at residues 498–503 (KTCTEW). Residues 588–706 (EIQTSPETSM…EQGGGCHSDT (119 aa)) form a disordered region. The segment covering 646 to 658 (ARSEGRISPKSDI) has biased composition (basic and acidic residues). At serine 653 the chain carries Phosphoserine. Residues 662–672 (GLAQSNNLQVP) are compositionally biased toward polar residues. The segment covering 673–685 (SSSEPSSLKGSTS) has biased composition (low complexity). The segment covering 694–706 (VRKEQGGGCHSDT) has biased composition (basic and acidic residues).

The protein belongs to the G-protein coupled receptor Fz/Smo family. As to quaternary structure, interacts with LMBR1L. In terms of processing, ubiquitinated by ZNRF3, leading to its degradation by the proteasome. In terms of tissue distribution, detected in adult heart, brain, placenta, lung, liver, skeletal muscle, kidney, pancreas, thymus, prostate, testis, ovary, small intestine and colon. In the fetus, expressed in brain, lung, liver and kidney.

Its subcellular location is the membrane. It is found in the cell membrane. The protein resides in the cell surface. It localises to the apical cell membrane. The protein localises to the cytoplasmic vesicle membrane. Its subcellular location is the endoplasmic reticulum membrane. Receptor for Wnt proteins. Most of frizzled receptors are coupled to the beta-catenin canonical signaling pathway, which leads to the activation of disheveled proteins, inhibition of GSK-3 kinase, nuclear accumulation of beta-catenin and activation of Wnt target genes. A second signaling pathway involving PKC and calcium fluxes has been seen for some family members, but it is not yet clear if it represents a distinct pathway or if it can be integrated in the canonical pathway, as PKC seems to be required for Wnt-mediated inactivation of GSK-3 kinase. Both pathways seem to involve interactions with G-proteins. May be involved in transduction and intercellular transmission of polarity information during tissue morphogenesis and/or in differentiated tissues. Together with FZD3, is involved in the neural tube closure and plays a role in the regulation of the establishment of planar cell polarity (PCP), particularly in the orientation of asymmetric bundles of stereocilia on the apical faces of a subset of auditory and vestibular sensory cells located in the inner ear. This chain is Frizzled-6 (FZD6), found in Homo sapiens (Human).